The primary structure comprises 754 residues: Glutathione biosynthesis bifunctional protein GshAB (754 aa).

The glutamate--cysteine ligase stretch occupies residues 1–332 (MTLNQLLQKL…QGHALNEKIA (332 aa)). An ATP-grasp domain is found at 488–746 (KKILADAGFP…ITTKILDKLF (259 aa)). 515–573 (PLIKDKQIVVKPKSTNFGLGISIFQEPASLDNYQKALEIAFAEDTSVLVEEFIPGTEYR) lines the ATP pocket. Mg(2+)-binding residues include Asp695, Glu716, and Asn718. Residues Asp695, Glu716, and Asn718 each contribute to the Mn(2+) site.

It in the N-terminal section; belongs to the glutamate--cysteine ligase type 1 family. Type 2 subfamily. As to quaternary structure, monomer. The cofactor is Mg(2+). It depends on Mn(2+) as a cofactor.

It carries out the reaction L-cysteine + L-glutamate + ATP = gamma-L-glutamyl-L-cysteine + ADP + phosphate + H(+). It catalyses the reaction gamma-L-glutamyl-L-cysteine + glycine + ATP = glutathione + ADP + phosphate + H(+). The protein operates within sulfur metabolism; glutathione biosynthesis; glutathione from L-cysteine and L-glutamate: step 1/2. It participates in sulfur metabolism; glutathione biosynthesis; glutathione from L-cysteine and L-glutamate: step 2/2. In terms of biological role, synthesizes glutathione from L-glutamate and L-cysteine via gamma-L-glutamyl-L-cysteine. The polypeptide is Glutathione biosynthesis bifunctional protein GshAB (Streptococcus thermophilus (strain CNRZ 1066)).